We begin with the raw amino-acid sequence, 396 residues long: NAD(P)H oxidoreductase RTN4IP1, mitochondrial (396 aa).

The N-terminal 40 residues, Met1–Ser40, are a transit peptide targeting the mitochondrion. Residues Gly52 to Val393 form the Enoyl reductase (ER) domain. NADPH is bound by residues Ser214, Gly216, Val217, Ser237, Tyr255, Asn276, Leu300, Ala341, Phe343, His386, Ala387, and Arg388.

The protein belongs to the zinc-containing alcohol dehydrogenase family. Quinone oxidoreductase subfamily. In terms of assembly, interacts with RTN4, UQCRC1 and UQCRC2. As to expression, widely expressed in mitochondria-enriched tissues. Found in heart, kidney, liver, brain and spinal cord.

It is found in the mitochondrion matrix. The protein resides in the mitochondrion outer membrane. It carries out the reaction a 3-demethylubiquinone + NADH + 2 H(+) = a 3-demethylubiquinol + NAD(+). The enzyme catalyses a 3-demethylubiquinone + NADPH + 2 H(+) = a 3-demethylubiquinol + NADP(+). The catalysed reaction is 3-demethylubiquinone-10 + NADH + 2 H(+) = 3-demethylubiquinol-10 + NAD(+). It catalyses the reaction 3-demethylubiquinone-10 + NADPH + 2 H(+) = 3-demethylubiquinol-10 + NADP(+). It functions in the pathway cofactor biosynthesis; ubiquinone biosynthesis. Functionally, NAD(P)H oxidoreductase involved in the ubiquinone biosynthetic pathway. Required for the O-methyltransferase activity of COQ3. Able to catalyze the oxidoreduction of 3-demethylubiquinone into 3-demethylubiquinol in vitro. However, it is unclear if 3-demethylubiquinone constitutes a substrate in vivo. May also play a role in the regulation of retinal ganglion cell (RGC) neurite outgrowth, and hence in the development of the inner retina and optic nerve. Appears to be a potent inhibitor of regeneration following spinal cord injury. The protein is NAD(P)H oxidoreductase RTN4IP1, mitochondrial of Mus musculus (Mouse).